Reading from the N-terminus, the 379-residue chain is 8-amino-7-oxononanoate synthase (379 aa).

Residues R27 and R34 each coordinate substrate. Residue 114 to 115 (GY) coordinates pyridoxal 5'-phosphate. Residue H139 participates in substrate binding. Residues S187, 212-215 (DDAH), and 232-235 (TLSK) each bind pyridoxal 5'-phosphate. K235 carries the post-translational modification N6-(pyridoxal phosphate)lysine. T344 contacts substrate.

Belongs to the class-II pyridoxal-phosphate-dependent aminotransferase family. BioF subfamily. In terms of assembly, homodimer. Pyridoxal 5'-phosphate serves as cofactor.

It carries out the reaction 6-carboxyhexanoyl-[ACP] + L-alanine + H(+) = (8S)-8-amino-7-oxononanoate + holo-[ACP] + CO2. The protein operates within cofactor biosynthesis; biotin biosynthesis. In terms of biological role, catalyzes the decarboxylative condensation of pimeloyl-[acyl-carrier protein] and L-alanine to produce 8-amino-7-oxononanoate (AON), [acyl-carrier protein], and carbon dioxide. This is 8-amino-7-oxononanoate synthase from Methylobacterium sp. (strain 4-46).